We begin with the raw amino-acid sequence, 279 residues long: Dehydrogenase/reductase SDR family member 4 (279 aa).

37–61 provides a ligand contact to NADP(+); that stretch reads LVTASTDGIGFAIARRLAEDGAHVV. At K93 the chain carries N6-acetyllysine; alternate. An N6-succinyllysine; alternate modification is found at K93. An N6-acetyllysine modification is found at K106. Residue S170 coordinates substrate. Residue Y183 is the Proton acceptor of the active site. Residue K187 participates in NADP(+) binding. K217 carries the N6-acetyllysine; alternate modification. K217 carries the N6-succinyllysine; alternate modification. S221 carries the phosphoserine modification. Residues K228 and K235 each carry the N6-succinyllysine modification. Positions 277–279 match the Peroxisomal targeting signal motif; sequence SRL.

It belongs to the short-chain dehydrogenases/reductases (SDR) family. In terms of assembly, homotetramer.

Its subcellular location is the peroxisome. The enzyme catalyses a secondary alcohol + NADP(+) = a ketone + NADPH + H(+). The catalysed reaction is 3alpha-hydroxy-5beta-pregnan-20-one + NADP(+) = 5beta-pregnan-3,20-dione + NADPH + H(+). It catalyses the reaction 5beta-dihydrotestosterone + NADPH + H(+) = 5beta-androstane-3alpha,17beta-diol + NADP(+). It carries out the reaction all-trans-retinol + NADP(+) = all-trans-retinal + NADPH + H(+). The enzyme catalyses isatin + NADPH + H(+) = 3-hydroxyindolin-2-one + NADP(+). Its function is as follows. NADPH-dependent oxidoreductase which catalyzes the reduction of a variety of compounds bearing carbonyl groups including ketosteroids, alpha-dicarbonyl compounds, aldehydes, aromatic ketones and quinones. Reduces all-trans-retinal and 9-cis retinal. Reduces 3-ketosteroids and benzil into 3alpha-hydroxysteroids and S-benzoin, respectively, in contrast to the stereoselectivity of primates DHRS4s which produce 3beta-hydroxysteroids and R-benzoin. In the reverse reaction, catalyzes the NADP-dependent oxidation of 3alpha-hydroxysteroids and alcohol, but with much lower efficiency. Involved in the metabolism of 3alpha-hydroxysteroids, retinoid, isatin and xenobiotic carbonyl compounds. This is Dehydrogenase/reductase SDR family member 4 from Mus musculus (Mouse).